The sequence spans 274 residues: GATA transcription factor 1 (274 aa).

Disordered stretches follow at residues M1–L39 and S102–A132. Positions K152 to R159 match the Nuclear localization signal motif. The GATA-type zinc finger occupies L190–A244.

Belongs to the type IV zinc-finger family. Class A subfamily. As to expression, mostly expressed in roots. Also expressed in stems, flowers and leaves.

The protein localises to the nucleus. In terms of biological role, transcriptional activator that specifically binds 5'-GATA-3' or 5'-GAT-3' motifs within gene promoters. May be involved in the regulation of some light-responsive genes. The protein is GATA transcription factor 1 (GATA1) of Arabidopsis thaliana (Mouse-ear cress).